Consider the following 486-residue polypeptide: Glutamyl-tRNA(Gln) amidotransferase subunit A (486 aa).

Active-site charge relay system residues include Lys-80 and Ser-155. The active-site Acyl-ester intermediate is Ser-179.

This sequence belongs to the amidase family. GatA subfamily. As to quaternary structure, heterotrimer of A, B and C subunits.

The enzyme catalyses L-glutamyl-tRNA(Gln) + L-glutamine + ATP + H2O = L-glutaminyl-tRNA(Gln) + L-glutamate + ADP + phosphate + H(+). Its function is as follows. Allows the formation of correctly charged Gln-tRNA(Gln) through the transamidation of misacylated Glu-tRNA(Gln) in organisms which lack glutaminyl-tRNA synthetase. The reaction takes place in the presence of glutamine and ATP through an activated gamma-phospho-Glu-tRNA(Gln). This chain is Glutamyl-tRNA(Gln) amidotransferase subunit A, found in Geobacillus sp. (strain WCH70).